Consider the following 72-residue polypeptide: Translation initiation factor IF-1 (72 aa).

Positions 1-72 constitute an S1-like domain; sequence MAKEDCIEME…TKGRIKFRSK (72 aa).

Belongs to the IF-1 family. In terms of assembly, component of the 30S ribosomal translation pre-initiation complex which assembles on the 30S ribosome in the order IF-2 and IF-3, IF-1 and N-formylmethionyl-tRNA(fMet); mRNA recruitment can occur at any time during PIC assembly.

The protein localises to the cytoplasm. Functionally, one of the essential components for the initiation of protein synthesis. Stabilizes the binding of IF-2 and IF-3 on the 30S subunit to which N-formylmethionyl-tRNA(fMet) subsequently binds. Helps modulate mRNA selection, yielding the 30S pre-initiation complex (PIC). Upon addition of the 50S ribosomal subunit IF-1, IF-2 and IF-3 are released leaving the mature 70S translation initiation complex. In Francisella tularensis subsp. tularensis (strain WY96-3418), this protein is Translation initiation factor IF-1.